The sequence spans 265 residues: 14-3-3-like protein GF14 nu (265 aa).

Phosphoserine occurs at positions 67, 109, and 190. Residue Thr-211 is modified to Phosphothreonine. The disordered stretch occupies residues 242 to 265 (AGGDEIKEASKHEPEEGKPAETGQ). Over residues 245–265 (DEIKEASKHEPEEGKPAETGQ) the composition is skewed to basic and acidic residues.

This sequence belongs to the 14-3-3 family. As to quaternary structure, component of the SERK1 signaling complex, composed of KAPP, CDC48A, GRF6 or GRF7, SERK1, SERK2, SERK3/BAK1 and BRI1. Interacts with DREB1A and DREB1B in the nucleus. Interacts with CINV1.

It is found in the nucleus. The protein localises to the cytoplasm. Is associated with a DNA binding complex that binds to the G box, a well-characterized cis-acting DNA regulatory element found in plant genes. The polypeptide is 14-3-3-like protein GF14 nu (GRF7) (Arabidopsis thaliana (Mouse-ear cress)).